Reading from the N-terminus, the 353-residue chain is Bone morphogenetic protein 2 (353 aa).

The propeptide occupies 1 to 239 (GSLKRPEDLL…GHPLHKREKR (239 aa)). N-linked (GlcNAc...) asparagine glycans are attached at residues Asn91, Asn121, and Asn157. Residues 228–248 (GKGHPLHKREKRQAKHKQRKR) form a disordered region. Residues 231–248 (HPLHKREKRQAKHKQRKR) show a composition bias toward basic residues. Intrachain disulfides connect Cys253–Cys318, Cys282–Cys350, and Cys286–Cys352. A glycan (N-linked (GlcNAc...) asparagine) is linked at Asn295.

It belongs to the TGF-beta family. As to quaternary structure, homodimer; disulfide-linked.

The protein resides in the secreted. In terms of biological role, negatively regulates the structure and function of the limb apical ectodermal ridge. The protein is Bone morphogenetic protein 2 (BMP2) of Gallus gallus (Chicken).